The sequence spans 731 residues: 1,4-alpha-glucan branching enzyme GlgB (731 aa).

Catalysis depends on Asp-408, which acts as the Nucleophile. Glu-461 (proton donor) is an active-site residue.

The protein belongs to the glycosyl hydrolase 13 family. GlgB subfamily. Monomer.

The catalysed reaction is Transfers a segment of a (1-&gt;4)-alpha-D-glucan chain to a primary hydroxy group in a similar glucan chain.. The protein operates within glycan biosynthesis; glycogen biosynthesis. In terms of biological role, catalyzes the formation of the alpha-1,6-glucosidic linkages in glycogen by scission of a 1,4-alpha-linked oligosaccharide from growing alpha-1,4-glucan chains and the subsequent attachment of the oligosaccharide to the alpha-1,6 position. The polypeptide is 1,4-alpha-glucan branching enzyme GlgB (Corynebacterium glutamicum (strain ATCC 13032 / DSM 20300 / JCM 1318 / BCRC 11384 / CCUG 27702 / LMG 3730 / NBRC 12168 / NCIMB 10025 / NRRL B-2784 / 534)).